Consider the following 207-residue polypeptide: Ribonuclease HII (207 aa).

The RNase H type-2 domain maps to 18 to 207; it reads TYLSGSDEAG…PIKKISKETS (190 aa). Positions 24, 25, and 116 each coordinate a divalent metal cation.

Belongs to the RNase HII family. Mn(2+) serves as cofactor. Requires Mg(2+) as cofactor.

It localises to the cytoplasm. It carries out the reaction Endonucleolytic cleavage to 5'-phosphomonoester.. Its function is as follows. Endonuclease that specifically degrades the RNA of RNA-DNA hybrids. In Mycoplasma mycoides subsp. mycoides SC (strain CCUG 32753 / NCTC 10114 / PG1), this protein is Ribonuclease HII.